A 433-amino-acid polypeptide reads, in one-letter code: Nuclear distribution protein PAC1 (433 aa).

The 33-residue stretch at 8 to 40 (QKDELHRAMLAYLHAAGMHNAYAALQHDAALAD) folds into the LisH domain. Positions 57 to 84 (SVIRLQKKVIDLENRNAALLAELAAAAR) form a coiled coil. 7 WD repeats span residues 103 to 144 (SHRA…RTLK), 146 to 184 (HTKA…TNVK), 188 to 227 (GHDH…CIKT), 230 to 269 (GHAE…TKME), 272 to 336 (GHEH…CLRT), 339 to 378 (GHDN…CTKT), and 381 to 429 (AHSH…QTIK).

This sequence belongs to the WD repeat LIS1/nudF family. As to quaternary structure, self-associates. Interacts with NDL1 and dynein.

The protein localises to the cytoplasm. It localises to the cytoskeleton. Its subcellular location is the spindle pole. Positively regulates the activity of the minus-end directed microtubule motor protein dynein. Plays a central role in positioning the mitotic spindle at the bud neck during cell division. Targets cytoplasmic dynein to microtubule plus ends, thereby promoting dynein-mediated microtubule sliding along the bud cortex and consequently the movement of the mitotic spindle to the bud neck. The chain is Nuclear distribution protein PAC1 from Cryptococcus neoformans var. neoformans serotype D (strain B-3501A) (Filobasidiella neoformans).